The chain runs to 337 residues: Histidine N-acetyltransferase (337 aa).

The propeptide at Met1–Lys2 is removed in mature form. The N-acetyltransferase domain maps to Leu21–Glu157.

As to expression, expressed exclusively in the brain and lens.

The enzyme catalyses L-histidine + acetyl-CoA = N(alpha)-acetyl-L-histidine + CoA + H(+). Its function is as follows. Enzyme responsible for the N-acetyl-histidine (NAH) synthesis, which is a major constituent of brain and lens of ectothermic vertebrates. The chain is Histidine N-acetyltransferase (hisat) from Oreochromis niloticus (Nile tilapia).